We begin with the raw amino-acid sequence, 336 residues long: Probable magnesium transporter NIPA2 (336 aa).

Over 1–7 the chain is Extracellular; the sequence is MEEMSPD. Residues 8–28 form a helical membrane-spanning segment; the sequence is NIHGVILAVSSSIFIGSSFII. Over 29 to 55 the chain is Cytoplasmic; the sequence is KKKGLKKAGVSGARAGEGGYGYLYEPW. The helical transmembrane segment at 56–76 threads the bilayer; that stretch reads WWAGMITMIVGEIANFAAYAF. Over 77–79 the chain is Extracellular; that stretch reads APA. The chain crosses the membrane as a helical span at residues 80 to 100; that stretch reads ILVTPLGALSIIFSAVLAHFI. Residues 101-104 lie on the Cytoplasmic side of the membrane; the sequence is LEEK. A helical membrane pass occupies residues 105 to 125; that stretch reads LHMFGILGCVLCVVGSTTIVL. Topologically, residues 126–145 are extracellular; the sequence is HAPHEQGIESVKQVWHLATE. A helical transmembrane segment spans residues 146-166; sequence PGFLAYSAVVLVVVLALIFYY. Residues 167-179 lie on the Cytoplasmic side of the membrane; that stretch reads EPRYGKTHMIVYV. Residues 180 to 200 form a helical membrane-spanning segment; that stretch reads GICSLMGSLTVMSVKAVAIAI. Residues 201–212 are Extracellular-facing; the sequence is KLTFSGMNQFKY. Residues 213 to 233 traverse the membrane as a helical segment; the sequence is FHAWIFIIVVTICCILQINYL. Residues 234 to 244 are Cytoplasmic-facing; that stretch reads NKALDNFNTAV. Residues 245-265 form a helical membrane-spanning segment; the sequence is ISPVYYVMFTTFTILASMIMF. The Extracellular segment spans residues 266-272; the sequence is KDWASQS. A helical transmembrane segment spans residues 273–293; that stretch reads GLQIATELCGFVTILSGTFLL. Over 294–336 the chain is Cytoplasmic; sequence HKTKDMGNSTSLRGSTSHSPRDTPVFINSGSSRSSNSTRPAIL. Residues 303-336 are disordered; it reads TSLRGSTSHSPRDTPVFINSGSSRSSNSTRPAIL. Positions 321 to 330 are enriched in low complexity; it reads NSGSSRSSNS.

The protein belongs to the NIPA (TC 2.A.7) family. Homodimer.

The protein localises to the cell membrane. The protein resides in the early endosome. Functionally, acts as a Mg(2+) transporter. Can also transport other divalent cations such as Fe(2+), Sr(2+), Ba(2+), Mn(2+) and Co(2+) but to a much less extent than Mg(2+). This is Probable magnesium transporter NIPA2 from Arabidopsis thaliana (Mouse-ear cress).